A 134-amino-acid chain; its full sequence is Ribonuclease VapC (134 aa).

A PINc domain is found at isoleucine 4–glutamate 124. Residue aspartate 6 coordinates Mg(2+).

It belongs to the PINc/VapC protein family. Mg(2+) is required as a cofactor.

In terms of biological role, toxic component of a type II toxin-antitoxin (TA) system. Has ssRNase activity. Its RNase activity is partially neutralized by cognate antitoxin VapB. Rapidly induces apoptosis upon microinjection into mouse fibroblasts (L929 line). Probably contributes to host cell death if bacterial cell lysis occurs during host infection. The chain is Ribonuclease VapC from Rickettsia bellii (strain RML369-C).